A 252-amino-acid polypeptide reads, in one-letter code: Indole-3-glycerol phosphate synthase (252 aa).

This sequence belongs to the TrpC family.

The catalysed reaction is 1-(2-carboxyphenylamino)-1-deoxy-D-ribulose 5-phosphate + H(+) = (1S,2R)-1-C-(indol-3-yl)glycerol 3-phosphate + CO2 + H2O. Its pathway is amino-acid biosynthesis; L-tryptophan biosynthesis; L-tryptophan from chorismate: step 4/5. This is Indole-3-glycerol phosphate synthase from Listeria monocytogenes serovar 1/2a (strain ATCC BAA-679 / EGD-e).